The chain runs to 426 residues: RuvB-like protein 1 (426 aa).

Position 62–69 (62–69) interacts with ATP; the sequence is GPVGSGKT.

Belongs to the RuvB family. Component of the SWR1 chromatin remodeling complex, the INO80 chromatin remodeling complex, and of the R2TP complex.

It localises to the nucleus. It carries out the reaction ATP + H2O = ADP + phosphate + H(+). DNA helicase which participates in several chromatin remodeling complexes, including the SWR1 and the INO80 complexes. The SWR1 complex mediates the ATP-dependent exchange of histone H2A for the H2A variant HZT1 leading to transcriptional regulation of selected genes by chromatin remodeling. The INO80 complex remodels chromatin by shifting nucleosomes and is involved in DNA repair. Also involved in pre-rRNA processing. This Encephalitozoon cuniculi (strain GB-M1) (Microsporidian parasite) protein is RuvB-like protein 1 (RVB1).